Here is a 461-residue protein sequence, read N- to C-terminus: Ribonuclease inhibitor (461 aa).

Serine 2 carries the post-translational modification N-acetylserine. A 2 X 5 AA tandem repeats of S-L-D-I-Q region spans residues 2–11; it reads SLDIQSLDIQ. 15 LRR repeats span residues 20–48, 49–76, 77–105, 106–133, 134–162, 163–190, 191–219, 220–247, 248–276, 277–304, 305–333, 334–361, 362–390, 391–418, and 419–447; these read WAEL…CKDI, SSAL…VHCV, LQGL…CGVL, SSTL…LQLL, CEGL…CKPL, ASVL…VRVL, CQGL…CRDL, CGIV…MAEL, CPGL…CGDL, CRVL…ARLL, CETL…CSHF, SSVL…VQEL, CQGL…CSSL, AATL…ILQL, and VESV…EDRL. Serine 91 bears the Phosphoserine mark.

As to quaternary structure, forms high-affinity heterodimers with RNASE1, ANG and RNASE2.

It localises to the cytoplasm. Its subcellular location is the nucleus. Its function is as follows. Ribonuclease inhibitor which inhibits RNASE1, RNASE2 and angiogenin (ANG). May play a role in redox homeostasis. Required to inhibit the cytotoxic tRNA ribonuclease activity of ANG in the cytoplasm in absence of stress. Relocates to the nucleus in response to stress, relieving inhibition of ANG in the cytoplasm, and inhibiting the angiogenic activity of ANG in the nucleus. The polypeptide is Ribonuclease inhibitor (RNH1) (Pan troglodytes (Chimpanzee)).